The chain runs to 202 residues: Small ribosomal subunit protein uS4c (202 aa).

Positions 90-151 (MRLDNTIFRL…KQKSRFIITK (62 aa)) constitute an S4 RNA-binding domain.

This sequence belongs to the universal ribosomal protein uS4 family. Part of the 30S ribosomal subunit. Contacts protein S5. The interaction surface between S4 and S5 is involved in control of translational fidelity.

The protein localises to the plastid. The protein resides in the chloroplast. Its function is as follows. One of the primary rRNA binding proteins, it binds directly to 16S rRNA where it nucleates assembly of the body of the 30S subunit. Functionally, with S5 and S12 plays an important role in translational accuracy. This chain is Small ribosomal subunit protein uS4c (rps4), found in Plagiochila adianthoides (Liverwort).